Consider the following 446-residue polypeptide: Tubulin alpha-1B chain (446 aa).

Gln-11 serves as a coordination point for GTP. A disordered region spans residues 34 to 55; that stretch reads GRLMDDSPSKHDSGSTFFSETG. The segment covering 35–46 has biased composition (basic and acidic residues); it reads RLMDDSPSKHDS. Glu-69, Ser-138, Gly-142, Thr-143, Ser-177, Asn-204, and Asn-226 together coordinate GTP. Glu-69 lines the Mg(2+) pocket. Residue Glu-252 is part of the active site.

The protein belongs to the tubulin family. Dimer of alpha and beta chains. A typical microtubule is a hollow water-filled tube with an outer diameter of 25 nm and an inner diameter of 15 nM. Alpha-beta heterodimers associate head-to-tail to form protofilaments running lengthwise along the microtubule wall with the beta-tubulin subunit facing the microtubule plus end conferring a structural polarity. Microtubules usually have 13 protofilaments but different protofilament numbers can be found in some organisms and specialized cells. It depends on Mg(2+) as a cofactor.

It localises to the cytoplasm. Its subcellular location is the cytoskeleton. It carries out the reaction GTP + H2O = GDP + phosphate + H(+). Functionally, tubulin is the major constituent of microtubules, a cylinder consisting of laterally associated linear protofilaments composed of alpha- and beta-tubulin heterodimers. Microtubules grow by the addition of GTP-tubulin dimers to the microtubule end, where a stabilizing cap forms. Below the cap, tubulin dimers are in GDP-bound state, owing to GTPase activity of alpha-tubulin. The sequence is that of Tubulin alpha-1B chain (TUB-1B) from Schizophyllum commune (Split gill fungus).